A 100-amino-acid chain; its full sequence is MIAPGDIAPRRDSEHELYVAVLSNALHRAADTGRVITCPFIPGRVPEDLLAMVVAVEQPNGTLLPELVQWLHVAALGAPLGNAGVAALREAASVVTALLC.

Functionally, toxic component of a type II toxin-antitoxin (TA) system. Upon expression in M.smegmatis inhibits colony formation. Its toxic effect is neutralized by coexpression with cognate antitoxin Rv0298/MT0312. The protein is Toxin Rv0299 of Mycobacterium tuberculosis (strain ATCC 25618 / H37Rv).